A 154-amino-acid chain; its full sequence is Gene 35 protein (154 aa).

The segment at 116–137 is disordered; it reads LTAAQDDPVEGGPEPADVADTI.

The protein belongs to the herpesviridae UL96 family.

The chain is Gene 35 protein (35) from Equus caballus (Horse).